The following is a 446-amino-acid chain: uncharacterized protein (446 aa).

Disordered regions lie at residues 63-95 (KNKP…SDLR) and 155-232 (AESS…HPVK). Over residues 156-169 (ESSVPTPKLTNESN) the composition is skewed to polar residues. Composition is skewed to basic and acidic residues over residues 182–199 (DQHE…DHSA) and 213–227 (ITKE…EARK).

This is an uncharacterized protein from Mus musculus (Mouse).